The sequence spans 233 residues: tRNA1(Val) (adenine(37)-N6)-methyltransferase (233 aa).

The protein belongs to the methyltransferase superfamily. tRNA (adenine-N(6)-)-methyltransferase family.

Its subcellular location is the cytoplasm. It catalyses the reaction adenosine(37) in tRNA1(Val) + S-adenosyl-L-methionine = N(6)-methyladenosine(37) in tRNA1(Val) + S-adenosyl-L-homocysteine + H(+). Specifically methylates the adenine in position 37 of tRNA(1)(Val) (anticodon cmo5UAC). The protein is tRNA1(Val) (adenine(37)-N6)-methyltransferase of Shewanella amazonensis (strain ATCC BAA-1098 / SB2B).